The following is a 314-amino-acid chain: Peroxidase 2 (314 aa).

An N-terminal signal peptide occupies residues 1–23; the sequence is MASASSVSLMLLVAAAMASAASA. At Gln-24 the chain carries Pyrrolidone carboxylic acid. Cystine bridges form between Cys-34-Cys-109, Cys-67-Cys-72, Cys-115-Cys-310, and Cys-194-Cys-219. His-65 (proton acceptor) is an active-site residue. Residues Asp-66, Val-69, Gly-71, Asp-73, and Ser-75 each coordinate Ca(2+). A glycan (N-linked (GlcNAc...) asparagine) is linked at Asn-148. Pro-157 is a substrate binding site. N-linked (GlcNAc...) asparagine glycosylation occurs at Asn-169. His-187 serves as a coordination point for heme b. Thr-188 contributes to the Ca(2+) binding site. A glycan (N-linked (GlcNAc...) asparagine) is linked at Asn-203. Residues Asp-234, Thr-237, and Asp-242 each coordinate Ca(2+). N-linked (GlcNAc...) asparagine glycans are attached at residues Asn-274 and Asn-309.

The protein belongs to the peroxidase family. Classical plant (class III) peroxidase subfamily. Requires Ca(2+) as cofactor. It depends on heme b as a cofactor.

The protein localises to the secreted. The catalysed reaction is 2 a phenolic donor + H2O2 = 2 a phenolic radical donor + 2 H2O. Its function is as follows. Removal of H(2)O(2), oxidation of toxic reductants, biosynthesis and degradation of lignin, suberization, auxin catabolism, response to environmental stresses such as wounding, pathogen attack and oxidative stress. These functions might be dependent on each isozyme/isoform in each plant tissue. The polypeptide is Peroxidase 2 (PRX112) (Oryza sativa subsp. japonica (Rice)).